A 389-amino-acid chain; its full sequence is Flap endonuclease 1 (389 aa).

Residues methionine 1 to arginine 105 form an N-domain region. Aspartate 34 is a Mg(2+) binding site. Arginine 71 serves as a coordination point for DNA. Mg(2+) is bound by residues aspartate 87, glutamate 159, glutamate 161, aspartate 180, and aspartate 182. Positions glutamate 123–histidine 254 are I-domain. Glutamate 159 is a DNA binding site. Residues glycine 232 and aspartate 234 each coordinate DNA. Aspartate 234 contacts Mg(2+). The tract at residues serine 338–phenylalanine 346 is interaction with PCNA. The tract at residues isoleucine 356–asparagine 389 is disordered.

Belongs to the XPG/RAD2 endonuclease family. FEN1 subfamily. In terms of assembly, interacts with PCNA. Three molecules of FEN1 bind to one PCNA trimer with each molecule binding to one PCNA monomer. PCNA stimulates the nuclease activity without altering cleavage specificity. Mg(2+) serves as cofactor. Phosphorylated. Phosphorylation upon DNA damage induces relocalization to the nuclear plasma.

The protein resides in the nucleus. It localises to the nucleolus. It is found in the nucleoplasm. The protein localises to the mitochondrion. Structure-specific nuclease with 5'-flap endonuclease and 5'-3' exonuclease activities involved in DNA replication and repair. During DNA replication, cleaves the 5'-overhanging flap structure that is generated by displacement synthesis when DNA polymerase encounters the 5'-end of a downstream Okazaki fragment. It enters the flap from the 5'-end and then tracks to cleave the flap base, leaving a nick for ligation. Also involved in the long patch base excision repair (LP-BER) pathway, by cleaving within the apurinic/apyrimidinic (AP) site-terminated flap. Acts as a genome stabilization factor that prevents flaps from equilibrating into structures that lead to duplications and deletions. Also possesses 5'-3' exonuclease activity on nicked or gapped double-stranded DNA, and exhibits RNase H activity. Also involved in replication and repair of rDNA and in repairing mitochondrial DNA. In Ostreococcus lucimarinus (strain CCE9901), this protein is Flap endonuclease 1.